We begin with the raw amino-acid sequence, 365 residues long: Flagellar P-ring protein (365 aa).

A signal peptide spans 1–22; that stretch reads MSVRRFLVWILALTVGAAPVMA.

Belongs to the FlgI family. In terms of assembly, the basal body constitutes a major portion of the flagellar organelle and consists of four rings (L,P,S, and M) mounted on a central rod.

The protein localises to the periplasm. It is found in the bacterial flagellum basal body. Its function is as follows. Assembles around the rod to form the L-ring and probably protects the motor/basal body from shearing forces during rotation. The polypeptide is Flagellar P-ring protein (Marinobacter nauticus (strain ATCC 700491 / DSM 11845 / VT8) (Marinobacter aquaeolei)).